Consider the following 388-residue polypeptide: Chorismate synthase (388 aa).

Arginine 39 and arginine 45 together coordinate NADP(+). Residues 132-134 (RSS), 251-252 (NA), glycine 296, 311-315 (KPIPT), and arginine 337 contribute to the FMN site.

Belongs to the chorismate synthase family. As to quaternary structure, homotetramer. FMNH2 serves as cofactor.

It carries out the reaction 5-O-(1-carboxyvinyl)-3-phosphoshikimate = chorismate + phosphate. It participates in metabolic intermediate biosynthesis; chorismate biosynthesis; chorismate from D-erythrose 4-phosphate and phosphoenolpyruvate: step 7/7. In terms of biological role, catalyzes the anti-1,4-elimination of the C-3 phosphate and the C-6 proR hydrogen from 5-enolpyruvylshikimate-3-phosphate (EPSP) to yield chorismate, which is the branch point compound that serves as the starting substrate for the three terminal pathways of aromatic amino acid biosynthesis. This reaction introduces a second double bond into the aromatic ring system. The chain is Chorismate synthase from Staphylococcus epidermidis (strain ATCC 35984 / DSM 28319 / BCRC 17069 / CCUG 31568 / BM 3577 / RP62A).